Here is a 510-residue protein sequence, read N- to C-terminus: Arginine biosynthesis bifunctional protein ArgJ, chloroplastic (510 aa).

Substrate is bound by residues threonine 223, lysine 249, glutamate 359, asparagine 505, and threonine 510.

The protein belongs to the ArgJ family. As to quaternary structure, heterodimer of an alpha and a beta chain.

The protein localises to the plastid. It is found in the chloroplast. It catalyses the reaction N(2)-acetyl-L-ornithine + L-glutamate = N-acetyl-L-glutamate + L-ornithine. It carries out the reaction L-glutamate + acetyl-CoA = N-acetyl-L-glutamate + CoA + H(+). The protein operates within amino-acid biosynthesis; L-arginine biosynthesis; L-ornithine and N-acetyl-L-glutamate from L-glutamate and N(2)-acetyl-L-ornithine (cyclic): step 1/1. It participates in amino-acid biosynthesis; L-arginine biosynthesis; N(2)-acetyl-L-ornithine from L-glutamate: step 1/4. In terms of biological role, catalyzes two activities which are involved in the cyclic version of arginine biosynthesis: the synthesis of acetylglutamate from glutamate and acetyl-CoA, and of ornithine by transacetylation between acetylornithine and glutamate. The protein is Arginine biosynthesis bifunctional protein ArgJ, chloroplastic of Vitis vinifera (Grape).